The primary structure comprises 97 residues: Co-chaperonin GroES (97 aa).

It belongs to the GroES chaperonin family. As to quaternary structure, heptamer of 7 subunits arranged in a ring. Interacts with the chaperonin GroEL.

The protein localises to the cytoplasm. In terms of biological role, together with the chaperonin GroEL, plays an essential role in assisting protein folding. The GroEL-GroES system forms a nano-cage that allows encapsulation of the non-native substrate proteins and provides a physical environment optimized to promote and accelerate protein folding. GroES binds to the apical surface of the GroEL ring, thereby capping the opening of the GroEL channel. In Pseudarthrobacter chlorophenolicus (strain ATCC 700700 / DSM 12829 / CIP 107037 / JCM 12360 / KCTC 9906 / NCIMB 13794 / A6) (Arthrobacter chlorophenolicus), this protein is Co-chaperonin GroES.